The sequence spans 876 residues: Importin subunit beta-1 (876 aa).

Met1 bears the N-acetylmethionine mark. HEAT repeat units follow at residues 3-29, 32-62, 85-120, 129-160, and 170-201; these read LITI…ERAA, NLPT…LQIK, ANAR…ACAE, LIPQ…ICQD, and SNEI…LLNS. Ser12 is modified (phosphoserine). The Importin N-terminal domain maps to 21-101; the sequence is AQKFLERAAV…KNYVLQTLGT (81 aa). N6-acetyllysine is present on Lys211. HEAT repeat units lie at residues 212–247, 260–302, 314–359, 363–392, 399–438, 449–485, 500–537, 544–592, 597–639, 644–680, 686–724, 729–777, 785–828, and 834–875; these read ESER…IMSL, LFAI…EAAE, YAKG…STCC, IVPH…AFGS, PNQL…ICEL, LAPL…YEAA, SSSF…EIVK, YPAV…QNVL, HQDA…VEVL, LKYM…LCRA, LPFC…ALAI, KKYL…QGLK, PDVM…LCTA, and LKLV…LKNQ. Residues 286-462 form an essential for high affinity interaction with RPL23A region; it reads VCDEEMDLAI…LQCLIEGLSA (177 aa). The tract at residues 329-342 is IAB-binding; the sequence is TLTKQDENDDDDDW. The interval 334–419 is ran-GTP binding; the sequence is DENDDDDDWN…MPTLIELMKD (86 aa). N6-acetyllysine occurs at positions 835 and 867.

It belongs to the importin beta family. Importin beta-1 subfamily. As to quaternary structure, forms a complex with an importin alpha subunit. Interacts with XPO1. Forms a heterodimer with IPO7. The KPNB1/IPO7 heterodimer interacts with H1 histone. Interacts with SNUPN. Interacts with H2A, H2B, H3 and H4 histones. Component of an import snRNP complex composed of KPNB1, SNUPN, SMN1 and ZNF259. Component of a nuclear export receptor complex composed of KPNB1, Ran, SNUPN and XPO1. Interacts with SRY. Interacts with PRKCI/atypical protein kinase C iota. Interacts with KPNA2. Interacts with KPNA7. Interacts with SNAI1 (via zinc fingers) and SNAI2 (via zinc fingers). Interacts with SLC35G1 and STIM1. Interacts with DCAF8. Interacts with RAN. Interacts with NUMA1 (via C-terminus); this interaction is inhibited by RanGTP. Interacts with ZBED1/hDREF; required for nuclear import of ZBED1/hDREF. Interacts with SRP19. Interacts with RPL23A (via BIB domain), RPS7 and RPL5. Post-translationally, mono-ADP-ribosylated by PARP16.

Its subcellular location is the cytoplasm. The protein localises to the nucleus envelope. Functions in nuclear protein import, either in association with an adapter protein, like an importin-alpha subunit, which binds to nuclear localization signals (NLS) in cargo substrates, or by acting as autonomous nuclear transport receptor. Acting autonomously, serves itself as NLS receptor. Docking of the importin/substrate complex to the nuclear pore complex (NPC) is mediated by KPNB1 through binding to nucleoporin FxFG repeats and the complex is subsequently translocated through the pore by an energy requiring, Ran-dependent mechanism. At the nucleoplasmic side of the NPC, Ran binds to importin-beta and the three components separate and importin-alpha and -beta are re-exported from the nucleus to the cytoplasm where GTP hydrolysis releases Ran from importin. The directionality of nuclear import is thought to be conferred by an asymmetric distribution of the GTP- and GDP-bound forms of Ran between the cytoplasm and nucleus. Mediates autonomously the nuclear import of ribosomal proteins RPL23A, RPS7 and RPL5. In association with IPO7, mediates the nuclear import of H1 histone. In vitro, mediates nuclear import of H2A, H2B, H3 and H4 histones. Imports MRTFA, SNAI1 and PRKCI into the nucleus. The protein is Importin subunit beta-1 (Kpnb1) of Mus musculus (Mouse).